The primary structure comprises 244 residues: Large ribosomal subunit protein uL30 (244 aa).

A disordered region spans residues 1 to 37; the sequence is MAPTKKVPQVPETVLKRRKQRADARTKAAQHKVTVAA.

This sequence belongs to the universal ribosomal protein uL30 family.

Functionally, binds to G-rich structures in 28S rRNA and in mRNAs. Plays a regulatory role in the translation apparatus; inhibits cell-free translation of mRNAs. In Caenorhabditis elegans, this protein is Large ribosomal subunit protein uL30 (rpl-7).